A 312-amino-acid polypeptide reads, in one-letter code: Elongation factor Ts (312 aa).

The involved in Mg(2+) ion dislocation from EF-Tu stretch occupies residues 80–83; sequence TDFV.

This sequence belongs to the EF-Ts family.

The protein localises to the cytoplasm. Its function is as follows. Associates with the EF-Tu.GDP complex and induces the exchange of GDP to GTP. It remains bound to the aminoacyl-tRNA.EF-Tu.GTP complex up to the GTP hydrolysis stage on the ribosome. The sequence is that of Elongation factor Ts from Paramagnetospirillum magneticum (strain ATCC 700264 / AMB-1) (Magnetospirillum magneticum).